We begin with the raw amino-acid sequence, 295 residues long: Pyridoxal 5'-phosphate synthase subunit PdxS (295 aa).

Asp-25 is a binding site for D-ribose 5-phosphate. Lys-82 acts as the Schiff-base intermediate with D-ribose 5-phosphate in catalysis. Position 154 (Gly-154) interacts with D-ribose 5-phosphate. Arg-166 lines the D-glyceraldehyde 3-phosphate pocket. D-ribose 5-phosphate contacts are provided by residues Gly-215 and 236 to 237 (GS).

It belongs to the PdxS/SNZ family. In the presence of PdxT, forms a dodecamer of heterodimers.

The enzyme catalyses aldehydo-D-ribose 5-phosphate + D-glyceraldehyde 3-phosphate + L-glutamine = pyridoxal 5'-phosphate + L-glutamate + phosphate + 3 H2O + H(+). It functions in the pathway cofactor biosynthesis; pyridoxal 5'-phosphate biosynthesis. Its function is as follows. Catalyzes the formation of pyridoxal 5'-phosphate from ribose 5-phosphate (RBP), glyceraldehyde 3-phosphate (G3P) and ammonia. The ammonia is provided by the PdxT subunit. Can also use ribulose 5-phosphate and dihydroxyacetone phosphate as substrates, resulting from enzyme-catalyzed isomerization of RBP and G3P, respectively. This chain is Pyridoxal 5'-phosphate synthase subunit PdxS, found in Bacillus cereus (strain 03BB102).